The primary structure comprises 418 residues: L-rhamnose isomerase (418 aa).

Positions 261, 293, and 295 each coordinate Mn(2+).

It belongs to the rhamnose isomerase family. Requires Mn(2+) as cofactor.

Its subcellular location is the cytoplasm. The enzyme catalyses L-rhamnopyranose = L-rhamnulose. It functions in the pathway carbohydrate degradation; L-rhamnose degradation; glycerone phosphate from L-rhamnose: step 1/3. Its function is as follows. Catalyzes the interconversion of L-rhamnose and L-rhamnulose. This chain is L-rhamnose isomerase, found in Clostridium beijerinckii (strain ATCC 51743 / NCIMB 8052) (Clostridium acetobutylicum).